Consider the following 718-residue polypeptide: Probable trehalose-phosphatase (718 aa).

The tract at residues 449 to 470 (LSMDQTGHKKVDAKKKPGIRKK) is disordered. Over residues 459–470 (VDAKKKPGIRKK) the composition is skewed to basic residues.

In the N-terminal section; belongs to the glycosyltransferase 20 family. The protein in the C-terminal section; belongs to the trehalose phosphatase family.

The enzyme catalyses alpha,alpha-trehalose 6-phosphate + H2O = alpha,alpha-trehalose + phosphate. The protein is Probable trehalose-phosphatase of Encephalitozoon cuniculi (strain GB-M1) (Microsporidian parasite).